The chain runs to 65 residues: Small ribosomal subunit protein bS21 (65 aa).

Belongs to the bacterial ribosomal protein bS21 family.

In Chlorobium limicola (strain DSM 245 / NBRC 103803 / 6330), this protein is Small ribosomal subunit protein bS21.